A 54-amino-acid polypeptide reads, in one-letter code: uncharacterized protein (54 aa).

This sequence to B.subtilis XkdX.

This is an uncharacterized protein from Bacillus subtilis (strain 168).